Here is a 117-residue protein sequence, read N- to C-terminus: Ribosome-binding factor A (117 aa).

Belongs to the RbfA family. Monomer. Binds 30S ribosomal subunits, but not 50S ribosomal subunits or 70S ribosomes.

Its subcellular location is the cytoplasm. In terms of biological role, one of several proteins that assist in the late maturation steps of the functional core of the 30S ribosomal subunit. Associates with free 30S ribosomal subunits (but not with 30S subunits that are part of 70S ribosomes or polysomes). Required for efficient processing of 16S rRNA. May interact with the 5'-terminal helix region of 16S rRNA. The polypeptide is Ribosome-binding factor A (Syntrophobacter fumaroxidans (strain DSM 10017 / MPOB)).